The primary structure comprises 757 residues: RNA-directed RNA polymerase catalytic subunit (757 aa).

Positions 53–82 (GRWTTNTETGAPQLNPIDGPLPEDNEPSGY) are disordered. Polar residues predominate over residues 55 to 64 (WTTNTETGAP). 2 short sequence motifs (nuclear localization signal) span residues 187–195 (RKRRVRDNM) and 203–216 (RTMGKKKQRLNKRS). The promoter-binding site stretch occupies residues 249–256 (RGFVYFVE). One can recognise a RdRp catalytic domain in the interval 286–483 (VRKMMTNSQD…GINMSKKKSY (198 aa)).

The protein belongs to the influenza viruses polymerase PB1 family. In terms of assembly, influenza RNA polymerase is composed of three subunits: PB1, PB2 and PA. Interacts (via N-terminus) with PA (via C-terminus). Interacts (via C-terminus) with PB2 (via N-terminus); this interaction is essential for transcription initiation. Interacts (via C-terminus) with human PKP2 (via N-terminus); the interaction competitively inhibits the interaction between the RNA polymerase subunits PB1 and PB2. Post-translationally, phosphorylated by host PRKCA.

Its subcellular location is the host nucleus. It is found in the host cytoplasm. The catalysed reaction is RNA(n) + a ribonucleoside 5'-triphosphate = RNA(n+1) + diphosphate. Its function is as follows. RNA-dependent RNA polymerase which is responsible for replication and transcription of virus RNA segments. The transcription of viral mRNAs occurs by a unique mechanism called cap-snatching. 5' methylated caps of cellular mRNAs are cleaved after 10-13 nucleotides by PA. In turn, these short capped RNAs are used as primers by PB1 for transcription of viral mRNAs. During virus replication, PB1 initiates RNA synthesis and copy vRNA into complementary RNA (cRNA) which in turn serves as a template for the production of more vRNAs. The protein is RNA-directed RNA polymerase catalytic subunit of Influenza A virus (strain A/Russia:St.Petersburg/8/2006 H1N1).